A 453-amino-acid polypeptide reads, in one-letter code: tRNA modification GTPase MnmE (453 aa).

Arg22, Glu79, and Lys119 together coordinate (6S)-5-formyl-5,6,7,8-tetrahydrofolate. Positions Gly215 to Gly376 constitute a TrmE-type G domain. K(+) is bound at residue Asn225. Residues Asn225 to Ser230, Thr244 to Thr250, Asp269 to Gly272, and Asn334 to Asp337 each bind GTP. Position 229 (Ser229) interacts with Mg(2+). Residues Thr244, Ile246, and Thr249 each contribute to the K(+) site. Residue Thr250 participates in Mg(2+) binding. Residue Lys453 coordinates (6S)-5-formyl-5,6,7,8-tetrahydrofolate.

Belongs to the TRAFAC class TrmE-Era-EngA-EngB-Septin-like GTPase superfamily. TrmE GTPase family. Homodimer. Heterotetramer of two MnmE and two MnmG subunits. Requires K(+) as cofactor.

It is found in the cytoplasm. Its function is as follows. Exhibits a very high intrinsic GTPase hydrolysis rate. Involved in the addition of a carboxymethylaminomethyl (cmnm) group at the wobble position (U34) of certain tRNAs, forming tRNA-cmnm(5)s(2)U34. The polypeptide is tRNA modification GTPase MnmE (Shewanella amazonensis (strain ATCC BAA-1098 / SB2B)).